A 757-amino-acid chain; its full sequence is Neutral ceramidase 2 (757 aa).

The first 25 residues, 1–25, serve as a signal peptide directing secretion; sequence MAVSLPLFQFILFLLLLLLSRTVYA. N-linked (GlcNAc...) asparagine glycosylation is present at Asn-311. Ser-330 functions as the Nucleophile in the catalytic mechanism. Residues Asn-348 and Asn-657 are each glycosylated (N-linked (GlcNAc...) asparagine).

It belongs to the neutral ceramidase family.

Its subcellular location is the secreted. It localises to the endoplasmic reticulum. The protein localises to the golgi apparatus. The enzyme catalyses an N-acylsphing-4-enine + H2O = sphing-4-enine + a fatty acid. Hydrolyzes the sphingolipid ceramide into sphingosine and free fatty acid. The chain is Neutral ceramidase 2 from Arabidopsis thaliana (Mouse-ear cress).